The chain runs to 566 residues: Serine/threonine-protein kinase PknE (566 aa).

The Cytoplasmic segment spans residues 1–337 (MDGTAESREG…PLPRSARQPW (337 aa)). Ser-7 carries the phosphoserine; by autocatalysis modification. Thr-11 carries the phosphothreonine; by autocatalysis modification. One can recognise a Protein kinase domain in the interval 16 to 275 (YRLRRLVGRG…DLSAAAHAAL (260 aa)). ATP-binding positions include 22 to 30 (VGRGGMGDV) and Lys-45. 2 positions are modified to phosphothreonine; by autocatalysis: Thr-50 and Thr-59. Asp-139 (proton acceptor) is an active-site residue. Phosphothreonine; by autocatalysis is present on residues Thr-170, Thr-175, and Thr-178. The segment at 296–330 (PVPSTHPVSPGTRWPQPTPWAGGAPPWGPPSSPLP) is disordered. Residues 338–358 (LWVGVAVAVVVALAGGLGIAL) traverse the membrane as a helical segment. Topologically, residues 359–566 (AHPWRSSGPR…DPSWLARLIG (208 aa)) are extracellular.

This sequence belongs to the protein kinase superfamily. Ser/Thr protein kinase family. Post-translationally, autophosphorylated on serine and threonine residues. Dephosphorylated by PstP.

Its subcellular location is the cell membrane. The enzyme catalyses L-seryl-[protein] + ATP = O-phospho-L-seryl-[protein] + ADP + H(+). The catalysed reaction is L-threonyl-[protein] + ATP = O-phospho-L-threonyl-[protein] + ADP + H(+). In Mycobacterium bovis (strain ATCC BAA-935 / AF2122/97), this protein is Serine/threonine-protein kinase PknE (pknE).